Reading from the N-terminus, the 257-residue chain is Thiazole synthase (257 aa).

Lys96 functions as the Schiff-base intermediate with DXP in the catalytic mechanism. Residues Gly157, 184–185 (AG), and 206–207 (NT) each bind 1-deoxy-D-xylulose 5-phosphate.

The protein belongs to the ThiG family. In terms of assembly, homotetramer. Forms heterodimers with either ThiH or ThiS.

The protein localises to the cytoplasm. It catalyses the reaction [ThiS sulfur-carrier protein]-C-terminal-Gly-aminoethanethioate + 2-iminoacetate + 1-deoxy-D-xylulose 5-phosphate = [ThiS sulfur-carrier protein]-C-terminal Gly-Gly + 2-[(2R,5Z)-2-carboxy-4-methylthiazol-5(2H)-ylidene]ethyl phosphate + 2 H2O + H(+). Its pathway is cofactor biosynthesis; thiamine diphosphate biosynthesis. Its function is as follows. Catalyzes the rearrangement of 1-deoxy-D-xylulose 5-phosphate (DXP) to produce the thiazole phosphate moiety of thiamine. Sulfur is provided by the thiocarboxylate moiety of the carrier protein ThiS. In vitro, sulfur can be provided by H(2)S. This is Thiazole synthase from Bartonella bacilliformis (strain ATCC 35685 / KC583 / Herrer 020/F12,63).